The chain runs to 301 residues: Nodulation protein D 3 (301 aa).

The 58-residue stretch at 6 to 63 (LDLNLLVVLDALLTARNLTAAASSINLSQPAMSAAVARLRNYFNDELFTMSGRERVLT) folds into the HTH lysR-type domain. Residues 23 to 43 (LTAAASSINLSQPAMSAAVAR) constitute a DNA-binding region (H-T-H motif).

This sequence belongs to the LysR transcriptional regulatory family.

NodD regulates the expression of the nodABCFE genes which encode other nodulation proteins. NodD is also a negative regulator of its own expression. Binds flavonoids as inducers. This is Nodulation protein D 3 (nodD3) from Mesorhizobium japonicum (strain LMG 29417 / CECT 9101 / MAFF 303099) (Mesorhizobium loti (strain MAFF 303099)).